A 147-amino-acid chain; its full sequence is MPVTVRVRRVGHRGPPLDLPRYESAGAAGLDLRADEPFTLAPGERRVVPTGLALELPPGHEGQVRPRSGLAARHGVGMVNAPGTIDADYRGEVGVILVNHGQAPVAFARGDRIAQLVIAPVVRAELELVDALSDSDRGAGGFGSTGQ.

Residues 67-69 (RSG), asparagine 80, and 84-86 (TID) each bind substrate.

The protein belongs to the dUTPase family. The cofactor is Mg(2+).

It carries out the reaction dUTP + H2O = dUMP + diphosphate + H(+). The protein operates within pyrimidine metabolism; dUMP biosynthesis; dUMP from dCTP (dUTP route): step 2/2. Its function is as follows. This enzyme is involved in nucleotide metabolism: it produces dUMP, the immediate precursor of thymidine nucleotides and it decreases the intracellular concentration of dUTP so that uracil cannot be incorporated into DNA. In Anaeromyxobacter dehalogenans (strain 2CP-1 / ATCC BAA-258), this protein is Deoxyuridine 5'-triphosphate nucleotidohydrolase.